Reading from the N-terminus, the 123-residue chain is Small ribosomal subunit protein uS12 (123 aa).

D89 is modified (3-methylthioaspartic acid). The tract at residues 104-123 is disordered; it reads SVGVKDRKKSRSKYGAKRPK. Positions 109–123 are enriched in basic residues; that stretch reads DRKKSRSKYGAKRPK.

The protein belongs to the universal ribosomal protein uS12 family. As to quaternary structure, part of the 30S ribosomal subunit. Contacts proteins S8 and S17. May interact with IF1 in the 30S initiation complex.

In terms of biological role, with S4 and S5 plays an important role in translational accuracy. Interacts with and stabilizes bases of the 16S rRNA that are involved in tRNA selection in the A site and with the mRNA backbone. Located at the interface of the 30S and 50S subunits, it traverses the body of the 30S subunit contacting proteins on the other side and probably holding the rRNA structure together. The combined cluster of proteins S8, S12 and S17 appears to hold together the shoulder and platform of the 30S subunit. The sequence is that of Small ribosomal subunit protein uS12 from Geotalea daltonii (strain DSM 22248 / JCM 15807 / FRC-32) (Geobacter daltonii).